The primary structure comprises 714 residues: Fatty acid oxidation complex subunit alpha (714 aa).

The tract at residues 1–190 is enoyl-CoA hydratase; the sequence is MEMASAFTLN…KLGLVDDVVP (190 aa). The tract at residues 306 to 714 is 3-hydroxyacyl-CoA dehydrogenase; sequence APLNSVGILG…FWKTTATDLQ (409 aa).

This sequence in the N-terminal section; belongs to the enoyl-CoA hydratase/isomerase family. In the central section; belongs to the 3-hydroxyacyl-CoA dehydrogenase family. As to quaternary structure, heterotetramer of two alpha chains (FadJ) and two beta chains (FadI).

The protein resides in the cytoplasm. It carries out the reaction a (3S)-3-hydroxyacyl-CoA = a (2E)-enoyl-CoA + H2O. The enzyme catalyses a 4-saturated-(3S)-3-hydroxyacyl-CoA = a (3E)-enoyl-CoA + H2O. The catalysed reaction is a (3S)-3-hydroxyacyl-CoA + NAD(+) = a 3-oxoacyl-CoA + NADH + H(+). It catalyses the reaction (3S)-3-hydroxybutanoyl-CoA = (3R)-3-hydroxybutanoyl-CoA. It participates in lipid metabolism; fatty acid beta-oxidation. Functionally, catalyzes the formation of a hydroxyacyl-CoA by addition of water on enoyl-CoA. Also exhibits 3-hydroxyacyl-CoA epimerase and 3-hydroxyacyl-CoA dehydrogenase activities. The protein is Fatty acid oxidation complex subunit alpha of Escherichia coli O7:K1 (strain IAI39 / ExPEC).